The chain runs to 344 residues: Meiotically up-regulated gene 10 protein (344 aa).

Residues E48–E207 form the DH domain.

It is found in the cytoplasm. Its subcellular location is the nucleus. Its function is as follows. Has a role in meiosis. The sequence is that of Meiotically up-regulated gene 10 protein (mug10) from Schizosaccharomyces pombe (strain 972 / ATCC 24843) (Fission yeast).